Here is a 72-residue protein sequence, read N- to C-terminus: MKITYPSIDKLLSRVNSRYSLSVLAAKRAHEIQAGAPLALKHYKSDKAVGEALEEIAAGKVTIDPEHREDIG.

It belongs to the RNA polymerase subunit omega family. As to quaternary structure, the RNAP catalytic core consists of 2 alpha, 1 beta, 1 beta' and 1 omega subunit. When a sigma factor is associated with the core the holoenzyme is formed, which can initiate transcription.

The enzyme catalyses RNA(n) + a ribonucleoside 5'-triphosphate = RNA(n+1) + diphosphate. Promotes RNA polymerase assembly. Latches the N- and C-terminal regions of the beta' subunit thereby facilitating its interaction with the beta and alpha subunits. This is DNA-directed RNA polymerase subunit omega from Lactobacillus johnsonii (strain CNCM I-12250 / La1 / NCC 533).